The following is a 186-amino-acid chain: Ribosome-recycling factor (186 aa).

The protein belongs to the RRF family.

The protein localises to the cytoplasm. Functionally, responsible for the release of ribosomes from messenger RNA at the termination of protein biosynthesis. May increase the efficiency of translation by recycling ribosomes from one round of translation to another. This Bacteroides fragilis (strain ATCC 25285 / DSM 2151 / CCUG 4856 / JCM 11019 / LMG 10263 / NCTC 9343 / Onslow / VPI 2553 / EN-2) protein is Ribosome-recycling factor.